A 228-amino-acid polypeptide reads, in one-letter code: Protein slowmo homolog (228 aa).

Residues 1-172 form the PRELI/MSF1 domain; the sequence is MPLFETIKHT…TIIKVQKEAE (172 aa).

This sequence belongs to the slowmo family.

This chain is Protein slowmo homolog (slmo), found in Dictyostelium discoideum (Social amoeba).